Consider the following 355-residue polypeptide: MKFEHRPVLLEPTVDALLQADFGGRGASRARPRDEAAALTRQATGIFVDGTFGRGGHSRELLGRLGPQARLVVFDKDPEAIAVAQALAAEDARVTVVHGGFATMTEELAARGIERIDGVMLDLGVSSPQIDDADRGFSFMREGPLDMRMDTSRGPTVADWLAQASVEEMREVIADYGEERFAFQVAKAIAARRATRPLHTTLELAECVASAVRTREKGQHPATRTFQALRIYINRELEELARALASAIELLVPGGRLAVISFHSLEDRMVKQCIAAAARPAAAHPRLPLRESELPQPILQTLGKVVADDAEVAGNARSRSAILRAAERTSQPLPATGAEDFVPAVPGAAEKGRRR.

Residues 55–57, D75, D122, and Q129 each bind S-adenosyl-L-methionine; that span reads GGH. Positions 327 to 355 are disordered; that stretch reads ERTSQPLPATGAEDFVPAVPGAAEKGRRR.

The protein belongs to the methyltransferase superfamily. RsmH family.

The protein resides in the cytoplasm. It catalyses the reaction cytidine(1402) in 16S rRNA + S-adenosyl-L-methionine = N(4)-methylcytidine(1402) in 16S rRNA + S-adenosyl-L-homocysteine + H(+). In terms of biological role, specifically methylates the N4 position of cytidine in position 1402 (C1402) of 16S rRNA. The protein is Ribosomal RNA small subunit methyltransferase H of Bordetella avium (strain 197N).